The chain runs to 203 residues: Guanylate kinase (203 aa).

Positions 3-181 (GTLYIVAAPS…AVSEMCAIFT (179 aa)) constitute a Guanylate kinase-like domain. 10-17 (APSGAGKS) is a binding site for ATP.

It belongs to the guanylate kinase family.

Its subcellular location is the cytoplasm. It carries out the reaction GMP + ATP = GDP + ADP. Essential for recycling GMP and indirectly, cGMP. In Xanthomonas campestris pv. campestris (strain 8004), this protein is Guanylate kinase.